The chain runs to 511 residues: Glucose-1-phosphate adenylyltransferase large subunit 1, chloroplastic/amyloplastic (511 aa).

The N-terminal 58 residues, 1 to 58 (MAAMDLRVAAPASVAAAARCGTSLARPWPARAVGGGGGGGGRGRRLSVRTSVATTEAA), are a transit peptide targeting the chloroplast.

It belongs to the bacterial/plant glucose-1-phosphate adenylyltransferase family. In terms of assembly, heterotetramer composed of two small and two large subunits. In terms of tissue distribution, expressed in leaves and stems.

The protein resides in the plastid. It localises to the chloroplast. The protein localises to the amyloplast. It catalyses the reaction alpha-D-glucose 1-phosphate + ATP + H(+) = ADP-alpha-D-glucose + diphosphate. It participates in glycan biosynthesis; starch biosynthesis. Its activity is regulated as follows. Activated by 3'phosphoglycerate, inhibited by orthophosphate. Allosteric regulation. Functionally, involved in synthesis of starch. Catalyzes the synthesis of ADP-glucose, a molecule that serves as an activated glycosyl donor for alpha-1,4-glucan synthesis. Essential for starch synthesis in leaf chloroplasts and endosperm amyloplasts. This Oryza sativa subsp. japonica (Rice) protein is Glucose-1-phosphate adenylyltransferase large subunit 1, chloroplastic/amyloplastic.